The sequence spans 60 residues: Metallothionein A (60 aa).

The tract at residues 1–28 (MDPCECSKSGNCNCGGSCTCTNCSCKSC) is beta. Cys-4, Cys-6, Cys-12, Cys-14, Cys-18, Cys-20, Cys-23, Cys-25, Cys-28, Cys-32, Cys-33, Cys-35, Cys-36, Cys-40, Cys-43, Cys-47, Cys-49, Cys-54, Cys-58, and Cys-59 together coordinate a divalent metal cation. Residues 29–60 (KKSCCPCCPSGCTKCASGCVCIGKTCDTSCCQ) form an alpha region.

The protein belongs to the metallothionein superfamily. Type 1 family.

Functionally, metallothioneins have a high content of cysteine residues that bind various heavy metals. The protein is Metallothionein A (mta) of Chaenocephalus aceratus (Blackfin icefish).